A 463-amino-acid chain; its full sequence is UDP-N-acetylmuramoyl-L-alanyl-D-glutamate--2,6-diaminopimelate ligase (463 aa).

Thr-21 provides a ligand contact to UDP-N-acetyl-alpha-D-muramoyl-L-alanyl-D-glutamate. 94 to 100 (GTNGKTT) lines the ATP pocket. UDP-N-acetyl-alpha-D-muramoyl-L-alanyl-D-glutamate is bound by residues 137–138 (TT), Ser-164, Gln-170, and Arg-172. Lys-204 is subject to N6-carboxylysine. Residues Arg-358, 382–385 (DNPR), Gly-433, and Glu-437 each bind meso-2,6-diaminopimelate. The Meso-diaminopimelate recognition motif motif lies at 382–385 (DNPR).

Belongs to the MurCDEF family. MurE subfamily. The cofactor is Mg(2+). Post-translationally, carboxylation is probably crucial for Mg(2+) binding and, consequently, for the gamma-phosphate positioning of ATP.

The protein localises to the cytoplasm. The enzyme catalyses UDP-N-acetyl-alpha-D-muramoyl-L-alanyl-D-glutamate + meso-2,6-diaminopimelate + ATP = UDP-N-acetyl-alpha-D-muramoyl-L-alanyl-gamma-D-glutamyl-meso-2,6-diaminopimelate + ADP + phosphate + H(+). The protein operates within cell wall biogenesis; peptidoglycan biosynthesis. Catalyzes the addition of meso-diaminopimelic acid to the nucleotide precursor UDP-N-acetylmuramoyl-L-alanyl-D-glutamate (UMAG) in the biosynthesis of bacterial cell-wall peptidoglycan. The sequence is that of UDP-N-acetylmuramoyl-L-alanyl-D-glutamate--2,6-diaminopimelate ligase from Helicobacter hepaticus (strain ATCC 51449 / 3B1).